The sequence spans 378 residues: Dihydroorotate dehydrogenase (quinone) (378 aa).

FMN is bound by residues 79–83 and T103; that span reads PGYDK. K83 lines the substrate pocket. A substrate-binding site is contributed by 128-132; the sequence is NRMGF. FMN-binding residues include N160 and N193. N193 provides a ligand contact to substrate. S196 serves as the catalytic Nucleophile. N198 contacts substrate. Residues K231 and T259 each coordinate FMN. Position 260–261 (260–261) interacts with substrate; the sequence is NT. FMN is bound by residues G289, G318, and 339-340; that span reads YT.

The protein belongs to the dihydroorotate dehydrogenase family. Type 2 subfamily. As to quaternary structure, monomer. It depends on FMN as a cofactor.

Its subcellular location is the cell membrane. The enzyme catalyses (S)-dihydroorotate + a quinone = orotate + a quinol. Its pathway is pyrimidine metabolism; UMP biosynthesis via de novo pathway; orotate from (S)-dihydroorotate (quinone route): step 1/1. In terms of biological role, catalyzes the conversion of dihydroorotate to orotate with quinone as electron acceptor. In Trichodesmium erythraeum (strain IMS101), this protein is Dihydroorotate dehydrogenase (quinone).